A 123-amino-acid polypeptide reads, in one-letter code: Probable prefoldin subunit 4 (123 aa).

It belongs to the prefoldin subunit beta family. Heterohexamer of two PFD-alpha type and four PFD-beta type subunits.

Its function is as follows. Binds specifically to cytosolic chaperonin (c-CPN) and transfers target proteins to it. Binds to nascent polypeptide chain and promotes folding in an environment in which there are many competing pathways for nonnative proteins. This Schizosaccharomyces pombe (strain 972 / ATCC 24843) (Fission yeast) protein is Probable prefoldin subunit 4.